A 287-amino-acid polypeptide reads, in one-letter code: Short-chain dehydrogenase virD (287 aa).

8 residues coordinate NADP(+): Val-10, Thr-36, Asp-57, Asn-85, Tyr-149, Lys-153, Val-182, and Thr-184. Tyr-149 serves as the catalytic Proton acceptor. Lys-153 functions as the Lowers pKa of active site Tyr in the catalytic mechanism.

It belongs to the short-chain dehydrogenases/reductases (SDR) family.

Its pathway is secondary metabolite biosynthesis. Functionally, short-chain dehydrogenase; part of the gene cluster that mediates the biosynthesis of virensols and trichoxide, fungal natural products that contain or are derived from a salicylaldehyde core. The pathway begins with the synthesis of the reduced chain in virensol C by the highly reducing polyketide synthase virA via condensation of one acetate and 8 malonate units. VirA has interesting programming rules since the first 2 ketides are fully reduced, the 3 following ketides undergo beta-dehydration, and the last 3 ketides are only reduced to beta-hydroxys to yield the trihydroxy portion. The production of aldehyde virensol C by virA alone is surprising, since virA does not contain a reductase (R) domain that is typically associated with reductive product release in HRPKS. The cupin-domain enzyme virC is involved in enhancing virA product turnover. The short-chain dehydrogenase virB then oxidizes the C-7 alcohol of virensol C to a ketone, yielding virensol D. Virensol D is further transformed to salicylaldehyde 5-deoxyaurocitrin by the short-chain dehydrogenase virD. VirD catalyzes the dehydrogenation of C-3 to form the beta-ketone aldehyde, which is followed by the generation of the nucleophilic C-2 that is required for the intramolecular aldol condensation between C-2 and C-7, itself followed by dehydration and aromatization which leads to salicylaldehyde 5-deoxyaurocitrin. While the dehydrogenation of virensol D is definitely catalyzed by virD, the aldol condensation and dehydration may be uncatalyzed or assisted by virD. The short chain dehydrogenase virG then converts salicylaldehyde 5-deoxyaurocitrin into virensol B which is further hydroxylated by the cytochrome P450 monooxygenase virE to yield the hydroquinone virensol A. VirI then may oxidize virensol A to form the quinone, while virH performs the epoxidation. Finally, the two remaining short-chain dehydrogenases, virK and virL, are probably responsible for reducing the ketones to the corresponding alcohols to furnish the epoxycyclohexanol structure in trichoxide. This is Short-chain dehydrogenase virD from Hypocrea virens (strain Gv29-8 / FGSC 10586) (Gliocladium virens).